We begin with the raw amino-acid sequence, 303 residues long: 2-(5''-triphosphoribosyl)-3'-dephosphocoenzyme-A synthase (303 aa).

Belongs to the CitG/MdcB family.

The catalysed reaction is 3'-dephospho-CoA + ATP = 2'-(5''-triphospho-alpha-D-ribosyl)-3'-dephospho-CoA + adenine. Catalyzes the formation of 2-(5''-triphosphoribosyl)-3'-dephosphocoenzyme-A, the precursor of the prosthetic group of the holo-acyl carrier protein (gamma chain) of citrate lyase, from ATP and dephospho-CoA. The chain is 2-(5''-triphosphoribosyl)-3'-dephosphocoenzyme-A synthase from Escherichia fergusonii (strain ATCC 35469 / DSM 13698 / CCUG 18766 / IAM 14443 / JCM 21226 / LMG 7866 / NBRC 102419 / NCTC 12128 / CDC 0568-73).